A 22-amino-acid chain; its full sequence is Superoxide dismutase [Cu-Zn] 2 (22 aa).

It belongs to the Cu-Zn superoxide dismutase family. In terms of assembly, homodimer. Cu cation is required as a cofactor. The cofactor is Zn(2+). Dominant isozyme in roots.

It is found in the cytoplasm. It catalyses the reaction 2 superoxide + 2 H(+) = H2O2 + O2. Functionally, destroys radicals which are normally produced within the cells and which are toxic to biological systems. The protein is Superoxide dismutase [Cu-Zn] 2 of Picea abies (Norway spruce).